The primary structure comprises 629 residues: tRNA uridine 5-carboxymethylaminomethyl modification enzyme MnmG (629 aa).

FAD-binding positions include 18–23, V130, and S188; that span reads GGGHAG. NAD(+) is bound at residue 280–294; sequence GPRYCPSIEDKVVRF. FAD is bound at residue Q377.

The protein belongs to the MnmG family. In terms of assembly, homodimer. Heterotetramer of two MnmE and two MnmG subunits. FAD is required as a cofactor.

It localises to the cytoplasm. NAD-binding protein involved in the addition of a carboxymethylaminomethyl (cmnm) group at the wobble position (U34) of certain tRNAs, forming tRNA-cmnm(5)s(2)U34. This Granulibacter bethesdensis (strain ATCC BAA-1260 / CGDNIH1) protein is tRNA uridine 5-carboxymethylaminomethyl modification enzyme MnmG.